The following is a 987-amino-acid chain: Kinesin-like protein KIN-14G (987 aa).

Residues Ser44–Glu163 form the Calponin-homology (CH) domain. The interval Ile201–Asp221 is disordered. The 328-residue stretch at Asn394–Val721 folds into the Kinesin motor domain. ATP is bound at residue Gly478–Thr485. The stretch at Ala725–Asn754 forms a coiled coil. 2 disordered regions span residues Gln759–Ser849 and Asn927–Thr987. Positions Met788–Pro797 are enriched in polar residues. The span at Gly840–Ser849 shows a compositional bias: basic and acidic residues. Positions Pro964–Arg974 are enriched in polar residues.

Belongs to the TRAFAC class myosin-kinesin ATPase superfamily. Kinesin family. KIN-14 subfamily. In terms of assembly, monomer. Flower specific.

It localises to the cytoplasm. The protein resides in the cytoskeleton. Functionally, microtubule-binding motor protein. The sequence is that of Kinesin-like protein KIN-14G from Arabidopsis thaliana (Mouse-ear cress).